Consider the following 1426-residue polypeptide: Homeobox protein cut-like 2 (1426 aa).

The disordered stretch occupies residues 77–104 (PEPPSAREQNEGTCPTGHTPANGNHLPG). Serine 81 is subject to Phosphoserine. Positions 131 to 311 (ITLAARLGEA…IKTELSILRA (181 aa)) form a coiled coil. Disordered stretches follow at residues 351–419 (ALLA…FPSL), 460–488 (KPPS…GPEE), 599–628 (EIES…STSE), 653–676 (ESGP…TASQ), 743–769 (YASV…PRGD), and 904–977 (LGQG…SSSQ). Residues 374–395 (PPYPPQLPPPPGPEDPLSPSPA) are compositionally biased toward pro residues. Low complexity-rich tracts occupy residues 397-408 (PLLGPSLGPDGP) and 460-470 (KPPSAPAASVP). Positions 482–569 (DGAGPEEEQL…VLALRTIQVR (88 aa)) form a DNA-binding region, CUT 1. The stretch at 587–655 (DAIKSILEQA…QQALLEMESG (69 aa)) forms a coiled coil. Polar residues predominate over residues 608–628 (SKNSPASVSIPNGTASSSTSE). Low complexity-rich tracts occupy residues 743-757 (YASV…SSYS), 910-928 (QAPT…EPTS), and 965-976 (SSSLGGKPFSSS). Residues 828-915 (QYELYMYREV…QGQGQAPTQQ (88 aa)) constitute a DNA-binding region (CUT 2). The segment at residues 983–1070 (QEMVAMSPEL…VEKLRDMKKL (88 aa)) is a DNA-binding region (CUT 3). The homeobox DNA-binding region spans 1113 to 1172 (AKKPRVVLAPAEKEALRKAYQLEPYPSQQTIELLSFQLNLKTNTVINWFHNYRSRMRREM). The interval 1177 to 1392 (TQDDPDFDPS…AALHPSTKVN (216 aa)) is disordered. 2 stretches are compositionally biased toward basic and acidic residues: residues 1233 to 1245 (APDR…KQEE) and 1260 to 1274 (DPDR…EHTH). Residues 1318–1332 (LSFKSTSESSCCSLE) are compositionally biased toward low complexity. The segment covering 1338–1350 (PSVISSPDLTTCV) has biased composition (polar residues). Residues 1351–1364 (SPAPSSSAPISPSL) are compositionally biased toward low complexity.

The protein belongs to the CUT homeobox family. In terms of tissue distribution, restricted to neural tissues. Expressed exclusively in the central and peripheral nervous systems.

Its subcellular location is the nucleus. Its function is as follows. Transcription factor involved in the control of neuronal proliferation and differentiation in the brain. Regulates dendrite development and branching, dendritic spine formation, and synaptogenesis in cortical layers II-III. Binds to DNA in a sequence-specific manner. The protein is Homeobox protein cut-like 2 (Cux2) of Mus musculus (Mouse).